The sequence spans 147 residues: Lysozyme C-3 (147 aa).

A signal peptide spans 1 to 18; sequence MKALIILGFLFLSVAVQG. In terms of domain architecture, C-type lysozyme spans 19 to 147; sequence KVFERCELAR…VSSYVQGCTL (129 aa). 4 disulfides stabilise this stretch: Cys-24–Cys-145, Cys-48–Cys-133, Cys-83–Cys-99, and Cys-95–Cys-113. Catalysis depends on residues Glu-53 and Asp-71.

It belongs to the glycosyl hydrolase 22 family. In terms of assembly, monomer. As to expression, stomach-specific.

It catalyses the reaction Hydrolysis of (1-&gt;4)-beta-linkages between N-acetylmuramic acid and N-acetyl-D-glucosamine residues in a peptidoglycan and between N-acetyl-D-glucosamine residues in chitodextrins.. Functionally, lysozymes have primarily a bacteriolytic function; those in tissues and body fluids are associated with the monocyte-macrophage system and enhance the activity of immunoagents. The sequence is that of Lysozyme C-3 (LYZ3) from Bos taurus (Bovine).